A 627-amino-acid chain; its full sequence is (-)-alpha-pinene synthase 2, chloroplastic (627 aa).

The transit peptide at M1–L36 directs the protein to the chloroplast. 3 residues coordinate Mg(2+): D378, D382, and D530. Positions D378–D382 match the DDXXD motif motif.

The protein belongs to the terpene synthase family. Tpsd subfamily. It depends on Mg(2+) as a cofactor. Requires Mn(2+) as cofactor.

It localises to the plastid. Its subcellular location is the chloroplast. It catalyses the reaction (2E)-geranyl diphosphate = (1S,5S)-beta-pinene + diphosphate. The catalysed reaction is (2E)-geranyl diphosphate = (1S,5S)-alpha-pinene + diphosphate. It functions in the pathway terpene metabolism; oleoresin biosynthesis. In terms of biological role, terpene synthase (TPS) involved in the biosynthesis of monoterpene natural products included in conifer oleoresin secretions and volatile emissions; these compounds contribute to biotic and abiotic stress defense against herbivores and pathogens. Catalyzes the conversion of (2E)-geranyl diphosphate (GPP) to (1S,5S)-beta-pinene. This Picea glauca (White spruce) protein is (-)-alpha-pinene synthase 2, chloroplastic.